A 1326-amino-acid chain; its full sequence is Putative late blight resistance protein homolog R1B-19 (1326 aa).

Coiled coils occupy residues 421–444 and 536–558; these read RYSD…ESLQ and PRMK…KLLN. 570–577 lines the ATP pocket; it reads GMPGLGKT. The 254-residue stretch at 611–864 folds into the NB-ARC domain; the sequence is LLSLLCDTIG…KVKTCRLHDV (254 aa). The stretch at 749–770 forms a coiled coil; it reads SEMEKEVECWEQVANNLGTRIH. LRR repeat units lie at residues 953-978, 980-996, 1027-1050, 1053-1070, 1071-1094, 1098-1118, 1119-1146, 1167-1191, and 1208-1230; these read FKFL…VYLK, FSAH…IYNL, LRHL…SAKL, LETL…LNFP, IRLE…ISAP, YLKL…ADHL, KNLE…MFPQ, FPNL…AMNI, and LIEK…AFKR. In terms of domain architecture, HMA spans 1209-1278; that stretch reads IEKKTLKLNL…AWHARVVVPT (70 aa).

The protein belongs to the disease resistance NB-LRR family.

The protein localises to the cytoplasm. The protein resides in the membrane. Functionally, confers resistance to late blight (Phytophthora infestans) races carrying the avirulence gene Avr1. Resistance proteins guard the plant against pathogens that contain an appropriate avirulence protein via an indirect interaction with this avirulence protein. That triggers a defense system including the hypersensitive response, which restricts the pathogen growth. This is Putative late blight resistance protein homolog R1B-19 (R1B-19) from Solanum demissum (Wild potato).